A 174-amino-acid chain; its full sequence is Adenine phosphoribosyltransferase (174 aa).

It belongs to the purine/pyrimidine phosphoribosyltransferase family. In terms of assembly, homodimer.

The protein localises to the cytoplasm. The enzyme catalyses AMP + diphosphate = 5-phospho-alpha-D-ribose 1-diphosphate + adenine. Its pathway is purine metabolism; AMP biosynthesis via salvage pathway; AMP from adenine: step 1/1. In terms of biological role, catalyzes a salvage reaction resulting in the formation of AMP, that is energically less costly than de novo synthesis. This is Adenine phosphoribosyltransferase from Phocaeicola vulgatus (strain ATCC 8482 / DSM 1447 / JCM 5826 / CCUG 4940 / NBRC 14291 / NCTC 11154) (Bacteroides vulgatus).